Consider the following 554-residue polypeptide: Intraflagellar transport protein 56 (554 aa).

Residues 1–27 (MMLSRAKPAVGGESPHTDKRKKKGRKI) form a disordered region. Over residues 18 to 27 (DKRKKKGRKI) the composition is skewed to basic residues. TPR repeat units lie at residues 57 to 90 (DDTNLWIGYCAFHLGDYKRALEEYENATKEENCN), 92 to 125 (EVWVNLACTYFFLGMYKQAEAAGFKAPKSRLQNR), 151 to 184 (KEDQLSLASIHYMRSHYQEAIDIYKRILLDNREY), and 468 to 501 (ANDCYKMGQFYYSAKAFDVLERLDPNPEYWEGKR).

Belongs to the IFT56 family. As to quaternary structure, component of the IFT complex B. Interacts with IFT46; the interaction is direct. In terms of tissue distribution, high expression detected in testis. Detected also retina, kidney, lung and brain tissue. The expression level is low in spleen. Expressed in the developing liver. Present in the airway epithelial cells and the testes (at protein level).

The protein localises to the cell projection. It localises to the cilium. Its function is as follows. Component of the intraflagellar transport (IFT) complex B required for transport of proteins in the motile cilium. Required for transport of specific ciliary cargo proteins related to motility, while it is neither required for IFT complex B assembly or motion nor for cilium assembly. Required for efficient coupling between the accumulation of GLI2 and GLI3 at the ciliary tips and their dissociation from the negative regulator SUFU. Plays a key role in maintaining the integrity of the IFT complex B and the proper ciliary localization of the IFT complex B components. Not required for IFT complex A ciliary localization or function. Essential for maintaining proper microtubule organization within the ciliary axoneme. The sequence is that of Intraflagellar transport protein 56 from Mus musculus (Mouse).